The sequence spans 242 residues: Type III pantothenate kinase (242 aa).

6-13 (DAGNTRIK) contacts ATP. Residues Y90 and 97–100 (GADR) each bind substrate. Residue D99 is the Proton acceptor of the active site. T122 contacts ATP. T172 contacts substrate.

This sequence belongs to the type III pantothenate kinase family. As to quaternary structure, homodimer. NH4(+) serves as cofactor. It depends on K(+) as a cofactor.

Its subcellular location is the cytoplasm. The enzyme catalyses (R)-pantothenate + ATP = (R)-4'-phosphopantothenate + ADP + H(+). The protein operates within cofactor biosynthesis; coenzyme A biosynthesis; CoA from (R)-pantothenate: step 1/5. Its function is as follows. Catalyzes the phosphorylation of pantothenate (Pan), the first step in CoA biosynthesis. This is Type III pantothenate kinase from Aromatoleum aromaticum (strain DSM 19018 / LMG 30748 / EbN1) (Azoarcus sp. (strain EbN1)).